The sequence spans 82 residues: Myrmicitoxin(1)-Pm3a (82 aa).

The first 23 residues, 1–23 (MEIPKLLYIAVIAIGLSGSLTCA), serve as a signal peptide directing secretion. Residues 24-59 (TPLANPLADPEAEAEAKATAEATAEAIAEALAEPEP) constitute a propeptide that is removed on maturation. A Leucine amide modification is found at Leu81.

This sequence belongs to the formicidae venom clade 1 family. Expressed by the venom gland.

The protein localises to the secreted. Toxin that causes a slowly developing temporary paralysis when intrathoracically injected into insects (blowflies). Does not cause spontaneous nocifensive behaviors by intraplantar injection in mice. In Pogonomyrmex maricopa (Maricopa harvester ant), this protein is Myrmicitoxin(1)-Pm3a.